Reading from the N-terminus, the 225-residue chain is Urease accessory protein UreE (225 aa).

Composition is skewed to basic and acidic residues over residues 189 to 202 (HSHD…EHEG) and 212 to 225 (NSHD…HSRR). Residues 189–225 (HSHDFMGHSHEHEGHRHVHNHAGNSHDNEHDEHHSRR) are disordered.

This sequence belongs to the UreE family.

Its subcellular location is the cytoplasm. In terms of biological role, involved in urease metallocenter assembly. Binds nickel. Probably functions as a nickel donor during metallocenter assembly. The sequence is that of Urease accessory protein UreE from Edwardsiella ictaluri.